Here is a 412-residue protein sequence, read N- to C-terminus: Acyl-[acyl-carrier-protein] hydrolase FATB3, chloroplastic (412 aa).

Residues 1 to 25 are compositionally biased toward low complexity; sequence MVAAAASSAFFSFPTPGTSPKPGKF. Residues 1 to 50 constitute a chloroplast transit peptide; sequence MVAAAASSAFFSFPTPGTSPKPGKFGNWPSSLSIPFNPKSNHNGGIQVKA. The disordered stretch occupies residues 1–63; sequence MVAAAASSAF…AHPKANGSAV (63 aa). A compositionally biased stretch (polar residues) spans 28–44; the sequence is WPSSLSIPFNPKSNHNG. Catalysis depends on residues Asn310, His312, and Cys347. Positions 393-412 are disordered; it reads NAGATGAVSTGKTSNGNSVS. Residues 399-412 show a composition bias toward polar residues; it reads AVSTGKTSNGNSVS.

This sequence belongs to the acyl-ACP thioesterase family.

The protein localises to the plastid. It localises to the chloroplast. The catalysed reaction is tetradecanoyl-[ACP] + H2O = tetradecanoate + holo-[ACP] + H(+). Its function is as follows. Plays an essential role in chain termination during de novo fatty acid synthesis. Possesses thioesterase activity for medium chain acyl-ACPs. Main substrate is 14:0. The chain is Acyl-[acyl-carrier-protein] hydrolase FATB3, chloroplastic from Cuphea viscosissima (Blue waxweed).